The sequence spans 158 residues: Urease accessory protein UreE (158 aa).

A disordered region spans residues P133 to D158. The segment covering H141–D158 has biased composition (basic and acidic residues).

The protein belongs to the UreE family.

It is found in the cytoplasm. Functionally, involved in urease metallocenter assembly. Binds nickel. Probably functions as a nickel donor during metallocenter assembly. This Chelativorans sp. (strain BNC1) protein is Urease accessory protein UreE.